The following is a 230-amino-acid chain: MTDTSLQAALRAEHLSKVYDEGPARIQVLDDVSLTVARGEMVAIVGASGSGKSTLLHILGLLDVPTSGSLVVDGTATEGLSEARKSAVRNRSLGFVYQFHHLLPEFSALDNVAMPLIVRRMDRDQARLQAREVLGLVGLAAREGHYPGQLSGGERQRVALARALVTRPACVLADEPTGNLDRQTAQNMFELLSRVNRESGTAFAIVTHDPELAARADRQLHMANGRLLPG.

The ABC transporter domain occupies 10-228; the sequence is LRAEHLSKVY…QLHMANGRLL (219 aa). Residue 46–53 participates in ATP binding; the sequence is GASGSGKS.

It belongs to the ABC transporter superfamily. Lipoprotein translocase (TC 3.A.1.125) family. As to quaternary structure, the complex is composed of two ATP-binding proteins (LolD) and two transmembrane proteins (LolC and LolE).

The protein resides in the cell inner membrane. Its function is as follows. Part of the ABC transporter complex LolCDE involved in the translocation of mature outer membrane-directed lipoproteins, from the inner membrane to the periplasmic chaperone, LolA. Responsible for the formation of the LolA-lipoprotein complex in an ATP-dependent manner. The chain is Lipoprotein-releasing system ATP-binding protein LolD from Bordetella avium (strain 197N).